The primary structure comprises 342 residues: Spermidine synthase (342 aa).

The segment at 9–42 (MKGTELPVKRPREEEAETEMEAANNSNNGCEKEE) is disordered. One can recognise a PABS domain in the interval 52–289 (PGWFSEISPL…GMIGFMLCST (238 aa)). An S-adenosyl 3-(methylsulfanyl)propylamine-binding site is contributed by Q83. Y113 is a binding site for putrescine. Residues Q114, D138, E158, 189–190 (DG), and D208 contribute to the S-adenosyl 3-(methylsulfanyl)propylamine site. Catalysis depends on D208, which acts as the Proton acceptor. Residues 208–211 (DSSD) and Y277 contribute to the putrescine site.

Belongs to the spermidine/spermine synthase family.

The catalysed reaction is S-adenosyl 3-(methylsulfanyl)propylamine + putrescine = S-methyl-5'-thioadenosine + spermidine + H(+). It functions in the pathway amine and polyamine biosynthesis; spermidine biosynthesis; spermidine from putrescine: step 1/1. In Solanum lycopersicum (Tomato), this protein is Spermidine synthase (SPDSYN).